The sequence spans 288 residues: Intermediate transcription factor 3 small subunit (288 aa).

This sequence belongs to the orthopoxvirus OPG134 family. Heterodimer of a 45 kDa (A23R) and a 32 kDa (A8R) subunit to form the virus intermediate transcription factor (VITF)-3.

Acts with RNA polymerase to initiate transcription from intermediate gene promoters. In Homo sapiens (Human), this protein is Intermediate transcription factor 3 small subunit (OPG134).